Here is a 295-residue protein sequence, read N- to C-terminus: 4-diphosphocytidyl-2-C-methyl-D-erythritol kinase (295 aa).

Lysine 15 is an active-site residue. Proline 102–serine 112 contacts ATP. Aspartate 144 is an active-site residue.

This sequence belongs to the GHMP kinase family. IspE subfamily.

The catalysed reaction is 4-CDP-2-C-methyl-D-erythritol + ATP = 4-CDP-2-C-methyl-D-erythritol 2-phosphate + ADP + H(+). It participates in isoprenoid biosynthesis; isopentenyl diphosphate biosynthesis via DXP pathway; isopentenyl diphosphate from 1-deoxy-D-xylulose 5-phosphate: step 3/6. Functionally, catalyzes the phosphorylation of the position 2 hydroxy group of 4-diphosphocytidyl-2C-methyl-D-erythritol. This is 4-diphosphocytidyl-2-C-methyl-D-erythritol kinase from Mesorhizobium japonicum (strain LMG 29417 / CECT 9101 / MAFF 303099) (Mesorhizobium loti (strain MAFF 303099)).